The following is a 298-amino-acid chain: ATP phosphoribosyltransferase (298 aa).

Belongs to the ATP phosphoribosyltransferase family.

Its subcellular location is the cytoplasm. It catalyses the reaction 1-(5-phospho-beta-D-ribosyl)-ATP + diphosphate = 5-phospho-alpha-D-ribose 1-diphosphate + ATP. It participates in amino-acid biosynthesis; L-histidine biosynthesis; L-histidine from 5-phospho-alpha-D-ribose 1-diphosphate: step 1/9. Functionally, catalyzes the condensation of ATP and 5-phosphoribose 1-diphosphate to form N'-(5'-phosphoribosyl)-ATP (PR-ATP). Has a crucial role in the pathway because the rate of histidine biosynthesis seems to be controlled primarily by regulation of the enzymatic activity. In Candida albicans (strain SC5314 / ATCC MYA-2876) (Yeast), this protein is ATP phosphoribosyltransferase (HIS1).